The primary structure comprises 185 residues: Gastrokine-1 (185 aa).

The signal sequence occupies residues 1–20 (MKFTIVFAGLLGVFLAPALA). The BRICHOS domain occupies 54–150 (NNGWDSWNSI…MCRGIPTYMA (97 aa)). Cysteine 81 and cysteine 142 are disulfide-bonded.

The protein belongs to the gastrokine family. As to expression, expressed in stomach (at protein level). No expression is detected in cancer tissue or gastric cancer cell lines.

It localises to the secreted. Its subcellular location is the cytoplasmic granule. The protein localises to the golgi apparatus. Its function is as follows. Has mitogenic activity and may be involved in maintaining the integrity of the gastric mucosal epithelium. The protein is Gastrokine-1 (GKN1) of Homo sapiens (Human).